A 367-amino-acid polypeptide reads, in one-letter code: Phospho-N-acetylmuramoyl-pentapeptide-transferase (367 aa).

10 helical membrane passes run 30–50, 71–91, 94–114, 138–158, 169–189, 200–220, 237–257, 264–284, 289–309, and 344–364; these read AAAI…IALL, LPTM…LLWA, TDPH…IGFI, ISLG…SVLM, LTID…TALS, GLAA…AYLA, GGEI…FLWF, IIMG…TALL, LLLP…SLQV, and KIVI…LMTL.

It belongs to the glycosyltransferase 4 family. MraY subfamily. It depends on Mg(2+) as a cofactor.

The protein localises to the cell inner membrane. It catalyses the reaction UDP-N-acetyl-alpha-D-muramoyl-L-alanyl-gamma-D-glutamyl-meso-2,6-diaminopimeloyl-D-alanyl-D-alanine + di-trans,octa-cis-undecaprenyl phosphate = di-trans,octa-cis-undecaprenyl diphospho-N-acetyl-alpha-D-muramoyl-L-alanyl-D-glutamyl-meso-2,6-diaminopimeloyl-D-alanyl-D-alanine + UMP. The protein operates within cell wall biogenesis; peptidoglycan biosynthesis. Its function is as follows. Catalyzes the initial step of the lipid cycle reactions in the biosynthesis of the cell wall peptidoglycan: transfers peptidoglycan precursor phospho-MurNAc-pentapeptide from UDP-MurNAc-pentapeptide onto the lipid carrier undecaprenyl phosphate, yielding undecaprenyl-pyrophosphoryl-MurNAc-pentapeptide, known as lipid I. In Chlorobium phaeovibrioides (strain DSM 265 / 1930) (Prosthecochloris vibrioformis (strain DSM 265)), this protein is Phospho-N-acetylmuramoyl-pentapeptide-transferase.